A 150-amino-acid polypeptide reads, in one-letter code: UPF0756 membrane protein HAPS_1649 (150 aa).

5 consecutive transmembrane segments (helical) span residues 1-21, 27-46, 52-72, 82-102, and 123-143; these read MSLQFNSVALLLVALILLGIF, VTISAAVLLIMQQTLLSKYV, YGIKIGIIILTIGVLAPLVSG, LINWKMIVAIIAGIVVAWLGG, and IIGVAFLKGVPVGPLIAAGIL.

This sequence belongs to the UPF0756 family.

The protein resides in the cell membrane. In Glaesserella parasuis serovar 5 (strain SH0165) (Haemophilus parasuis), this protein is UPF0756 membrane protein HAPS_1649.